Consider the following 89-residue polypeptide: Small ribosomal subunit protein uS19 (89 aa).

It belongs to the universal ribosomal protein uS19 family.

In terms of biological role, protein S19 forms a complex with S13 that binds strongly to the 16S ribosomal RNA. This Xylella fastidiosa (strain M12) protein is Small ribosomal subunit protein uS19.